A 375-amino-acid chain; its full sequence is Putative actin-26 (375 aa).

It belongs to the actin family.

It localises to the cytoplasm. The protein resides in the cytoskeleton. The enzyme catalyses ATP + H2O = ADP + phosphate + H(+). Functionally, actins are highly conserved proteins that are involved in various types of cell motility and are ubiquitously expressed in all eukaryotic cells. Multiple isoforms are involved in various cellular functions such as cytoskeleton structure, cell mobility, chromosome movement and muscle contraction. This chain is Putative actin-26 (act26), found in Dictyostelium discoideum (Social amoeba).